The primary structure comprises 396 residues: Elongation factor Tu 2 (396 aa).

The tr-type G domain occupies 10 to 206 (KPHVNIGTIG…AVDSYIPTPQ (197 aa)). Residues 19-26 (GHVDHGKT) form a G1 region. 19–26 (GHVDHGKT) contributes to the GTP binding site. Residue Thr26 participates in Mg(2+) binding. A G2 region spans residues 60 to 64 (GITIS). Residues 81–84 (DCPG) form a G3 region. GTP-binding positions include 81-85 (DCPGH) and 136-139 (NKVD). Residues 136–139 (NKVD) are G4. A G5 region spans residues 174-176 (SAL).

It belongs to the TRAFAC class translation factor GTPase superfamily. Classic translation factor GTPase family. EF-Tu/EF-1A subfamily. Monomer.

The protein resides in the cytoplasm. It carries out the reaction GTP + H2O = GDP + phosphate + H(+). Its function is as follows. GTP hydrolase that promotes the GTP-dependent binding of aminoacyl-tRNA to the A-site of ribosomes during protein biosynthesis. The polypeptide is Elongation factor Tu 2 (Myxococcus xanthus (strain DK1622)).